The following is a 120-amino-acid chain: Protein RALF-like 1 (120 aa).

An N-terminal signal peptide occupies residues 1 to 26 (MDKSFTLFLTLTILVVFIISSPPVQA). The propeptide at 27 to 71 (GFANDLGGVAWATTGDNGSGCHGSIAECIGAEEEEMDSEINRRIL) is removed in mature form. Residue N43 is glycosylated (N-linked (GlcNAc...) asparagine). Intrachain disulfides connect C89–C99 and C112–C118.

This sequence belongs to the plant rapid alkalinization factor (RALF) family. As to quaternary structure, interacts with FER and promotes its phosphorylation and subsequent activation. Post-translationally, proteolytically cleaved, probably by S1P, a subtilisin-like serine protease (subtilase). In terms of tissue distribution, expressed in roots and stems.

Its subcellular location is the secreted. Its function is as follows. Cell signaling peptide that may regulate plant stress, growth, and development. Mediates a rapid alkalinization of extracellular space by mediating a transient increase in the cytoplasmic Ca(2+) concentration leading to a calcium-dependent signaling events through a cell surface receptor and a concomitant activation of some intracellular mitogen-activated protein kinases. Mostly active in roots. Prevents plant growth (e.g. root and leaf length). Suppresses cell elongation of the primary root by activating the cell surface receptor FER and triggering phosphorylation of AHA2 and subsequent extracellular alkalinization. In Arabidopsis thaliana (Mouse-ear cress), this protein is Protein RALF-like 1 (RALF1).